The following is a 439-amino-acid chain: Protein translocase subunit SecY (439 aa).

10 consecutive transmembrane segments (helical) span residues 19-39 (ILFT…TVPG), 68-88 (YSLF…VQLL), 116-136 (YITL…FQAM), 151-171 (LMIG…GEQI), 176-196 (FGSG…PSAV), 216-236 (WLFV…TTFV), 269-289 (VIPV…LQFL), 312-332 (WTGM…YSFV), 373-393 (VGAL…NVWG), and 396-416 (KIVA…IQAV).

Belongs to the SecY/SEC61-alpha family. In terms of assembly, component of the Sec protein translocase complex. Heterotrimer consisting of SecY, SecE and SecG subunits. The heterotrimers can form oligomers, although 1 heterotrimer is thought to be able to translocate proteins. Interacts with the ribosome. Interacts with SecDF, and other proteins may be involved. Interacts with SecA.

The protein localises to the cell membrane. The central subunit of the protein translocation channel SecYEG. Consists of two halves formed by TMs 1-5 and 6-10. These two domains form a lateral gate at the front which open onto the bilayer between TMs 2 and 7, and are clamped together by SecE at the back. The channel is closed by both a pore ring composed of hydrophobic SecY resides and a short helix (helix 2A) on the extracellular side of the membrane which forms a plug. The plug probably moves laterally to allow the channel to open. The ring and the pore may move independently. In Lactococcus lactis subsp. lactis (strain IL1403) (Streptococcus lactis), this protein is Protein translocase subunit SecY.